A 371-amino-acid chain; its full sequence is Carbamoyl phosphate synthase small chain (371 aa).

A CPSase region spans residues 1–186; the sequence is MDYYNNDTPG…IHQGKTGDVV (186 aa). Residues Ser-52, Gly-233, and Gly-235 each coordinate L-glutamine. Positions 185–371 constitute a Glutamine amidotransferase type-1 domain; the sequence is VVVVVDCGIK…KFKKMVVGDA (187 aa). The active-site Nucleophile is the Cys-261. L-glutamine-binding residues include Leu-262, Gln-265, Asn-303, Gly-305, and Tyr-306. Residues His-346 and Glu-348 contribute to the active site.

The protein belongs to the CarA family. Composed of two chains; the small (or glutamine) chain promotes the hydrolysis of glutamine to ammonia, which is used by the large (or ammonia) chain to synthesize carbamoyl phosphate. Tetramer of heterodimers (alpha,beta)4.

It carries out the reaction hydrogencarbonate + L-glutamine + 2 ATP + H2O = carbamoyl phosphate + L-glutamate + 2 ADP + phosphate + 2 H(+). The enzyme catalyses L-glutamine + H2O = L-glutamate + NH4(+). It functions in the pathway amino-acid biosynthesis; L-arginine biosynthesis; carbamoyl phosphate from bicarbonate: step 1/1. It participates in pyrimidine metabolism; UMP biosynthesis via de novo pathway; (S)-dihydroorotate from bicarbonate: step 1/3. Functionally, small subunit of the glutamine-dependent carbamoyl phosphate synthetase (CPSase). CPSase catalyzes the formation of carbamoyl phosphate from the ammonia moiety of glutamine, carbonate, and phosphate donated by ATP, constituting the first step of 2 biosynthetic pathways, one leading to arginine and/or urea and the other to pyrimidine nucleotides. The small subunit (glutamine amidotransferase) binds and cleaves glutamine to supply the large subunit with the substrate ammonia. The protein is Carbamoyl phosphate synthase small chain of Sulfolobus acidocaldarius (strain ATCC 33909 / DSM 639 / JCM 8929 / NBRC 15157 / NCIMB 11770).